A 478-amino-acid polypeptide reads, in one-letter code: Succinyl-CoA:acetate/propanoyl-CoA:succinate CoA transferase (478 aa).

A mitochondrion-targeting transit peptide spans 1-30 (MYQLAFLRCRYASPIVREARRAFHASRKCQ). Position 256–260 (256–260 (GIGAI)) interacts with CoA. Glu-279 serves as the catalytic 5-glutamyl coenzyme A thioester intermediate. Ile-354, Gly-377, and Lys-404 together coordinate CoA.

The protein belongs to the acetyl-CoA hydrolase/transferase family.

It localises to the mitochondrion. It carries out the reaction succinyl-CoA + acetate = succinate + acetyl-CoA. The enzyme catalyses propanoyl-CoA + succinate = propanoate + succinyl-CoA. Functionally, transferase involved in anaerobic fumarate-respiration in the mitochondria. Catalyzes the transfer of the CoA moiety of acetyl-CoA or propionyl-CoA to succinate, thereby forming acetate and propionate, respectively. Acetate and propionate are the two major metabolic end products in the anaerobic mitochondrial metabolism of F.hepatica. Also displays CoA transferase activities from acetyl-CoA to propionate, acetate and butyrate. In Fasciola hepatica (Liver fluke), this protein is Succinyl-CoA:acetate/propanoyl-CoA:succinate CoA transferase.